We begin with the raw amino-acid sequence, 547 residues long: Probable hydroxyacid-oxoacid transhydrogenase, mitochondrial (547 aa).

It belongs to the iron-containing alcohol dehydrogenase family. Hydroxyacid-oxoacid transhydrogenase subfamily.

The protein localises to the mitochondrion. The enzyme catalyses (S)-3-hydroxybutanoate + 2-oxoglutarate = (R)-2-hydroxyglutarate + acetoacetate. It carries out the reaction 4-hydroxybutanoate + 2-oxoglutarate = (R)-2-hydroxyglutarate + succinate semialdehyde. In terms of biological role, catalyzes the cofactor-independent reversible oxidation of gamma-hydroxybutyrate (GHB) to succinic semialdehyde (SSA) coupled to reduction of 2-ketoglutarate (2-KG) to D-2-hydroxyglutarate (D-2-HG). L-3-hydroxybutyrate (L-3-OHB) is also a substrate for HOT when using 2-KG as hydrogen acceptor, resulting in the formation of D-2-HG. This is Probable hydroxyacid-oxoacid transhydrogenase, mitochondrial (adhfe1) from Dictyostelium discoideum (Social amoeba).